The following is a 126-amino-acid chain: MGIQGGSVLFGLLLALAVFCHSGHSLQCYNCPNPTTNCKTAINCSSGFDTCLIARAGLQVYNQCWKFANCNFNDISTLLKESELQYFCCKEDLCNEQLENGGTSLSEKTVLLLVTPLLAAAWCLHP.

Positions 1–25 are cleaved as a signal peptide; that stretch reads MGIQGGSVLFGLLLALAVFCHSGHS. Residues 26 to 106 form the UPAR/Ly6 domain; it reads LQCYNCPNPT…QLENGGTSLS (81 aa). 5 disulfides stabilise this stretch: C28/C51, C31/C38, C44/C64, C70/C88, and C89/C94. N43 carries an N-linked (GlcNAc...) asparagine glycan. N100 carries GPI-anchor amidated asparagine lipidation. The propeptide at 101 to 126 is removed in mature form; the sequence is GGTSLSEKTVLLLVTPLLAAAWCLHP.

Interacts with T-cell surface antigen CD2. N- and O-glycosylated.

The protein resides in the cell membrane. The protein localises to the secreted. Potent inhibitor of the complement membrane attack complex (MAC) action, which protects self-cells from damage during complement activation. Acts by binding to the beta-haipins of C8 (C8A and C8B) components of the assembling MAC, forming an intermolecular beta-sheet that prevents incorporation of the multiple copies of C9 required for complete formation of the osmolytic pore. This Papio sp. (Baboon) protein is CD59 glycoprotein.